A 266-amino-acid polypeptide reads, in one-letter code: Heat-inducible transcription repressor HrcA (266 aa).

Belongs to the HrcA family.

Functionally, negative regulator of class I heat shock genes (grpE-dnaK-dnaJ and groELS operons). Prevents heat-shock induction of these operons. This is Heat-inducible transcription repressor HrcA from Helicobacter pylori (strain J99 / ATCC 700824) (Campylobacter pylori J99).